Reading from the N-terminus, the 421-residue chain is D-amino acid dehydrogenase (421 aa).

3-17 (VIVLGSGVIGVASAY) is an FAD binding site.

It belongs to the DadA oxidoreductase family. FAD serves as cofactor.

The catalysed reaction is a D-alpha-amino acid + A + H2O = a 2-oxocarboxylate + AH2 + NH4(+). The protein operates within amino-acid degradation; D-alanine degradation; NH(3) and pyruvate from D-alanine: step 1/1. Functionally, oxidative deamination of D-amino acids. This chain is D-amino acid dehydrogenase, found in Acinetobacter baumannii (strain SDF).